The primary structure comprises 371 residues: Macronuclear solute carrier homolog CR-MSC (371 aa).

Solcar repeat units follow at residues 16–111 (RMNY…FYDK), 120–208 (ARPD…CKEN), and 215–304 (PHWI…LSQF). The next 6 helical transmembrane spans lie at 22–42 (FAAANVIALITHAATQPLDMV), 89–109 (TFFFRTVGYTTARVTAFGYFY), 126–146 (VAAGVLGGFIAGVVTNPIDIV), 184–204 (AGANGFKLAAICSSMTNIYDW), 221–241 (LWGTAVAVAIGTVVSMPFDMI), and 281–301 (FGSFYAGGEAYFLRLFLICYL).

This sequence belongs to the mitochondrial carrier (TC 2.A.29) family.

Its subcellular location is the membrane. The protein is Macronuclear solute carrier homolog CR-MSC of Oxytricha trifallax (Sterkiella histriomuscorum).